We begin with the raw amino-acid sequence, 281 residues long: UPF0294 protein VC_2238 (281 aa).

Belongs to the UPF0294 family.

Its subcellular location is the cytoplasm. The protein is UPF0294 protein VC_2238 of Vibrio cholerae serotype O1 (strain ATCC 39315 / El Tor Inaba N16961).